The primary structure comprises 72 residues: UPF0346 protein GK1571 (72 aa).

Belongs to the UPF0346 family.

This chain is UPF0346 protein GK1571, found in Geobacillus kaustophilus (strain HTA426).